Here is an 828-residue protein sequence, read N- to C-terminus: Glycerol-3-phosphate acyltransferase 1, mitochondrial (828 aa).

The Cytoplasmic segment spans residues 1–87 (MEESSVTIGT…FFNPSIPSLG (87 aa)). The tract at residues 80–120 (NPSIPSLGLRNVIYINETHTRHRGWLARRLSYILFVQERDV) is important for mitochondrial localization. Residues 88 to 118 (LRNVIYINETHTRHRGWLARRLSYILFVQER) lie within the membrane without spanning it. The Cytoplasmic portion of the chain corresponds to 119 to 828 (DVHKGMFATS…LEYILSFVVL (710 aa)). An HXXXXD motif motif is present at residues 230-235 (HRSHID). CoA is bound by residues Arg278, Arg279, Lys288, Arg293, and Arg328. Phosphoserine is present on Ser380. Arg462 contacts CoA. A phosphoserine mark is found at Ser688 and Ser695. An N6-acetyllysine mark is found at Lys780 and Lys784.

The protein belongs to the GPAT/DAPAT family.

Its subcellular location is the mitochondrion outer membrane. It carries out the reaction sn-glycerol 3-phosphate + an acyl-CoA = a 1-acyl-sn-glycero-3-phosphate + CoA. The catalysed reaction is sn-glycerol 3-phosphate + hexadecanoyl-CoA = 1-hexadecanoyl-sn-glycero-3-phosphate + CoA. It catalyses the reaction (9Z,12Z)-octadecadienoyl-CoA + sn-glycerol 3-phosphate = 1-(9Z,12Z)-octadecadienoyl-sn-glycero-3-phosphate + CoA. The enzyme catalyses sn-glycerol 3-phosphate + (9Z)-octadecenoyl-CoA = 1-(9Z-octadecenoyl)-sn-glycero-3-phosphate + CoA. It carries out the reaction sn-glycerol 3-phosphate + octadecanoyl-CoA = 1-octadecanoyl-sn-glycero-3-phosphate + CoA. The catalysed reaction is dodecanoyl-CoA + sn-glycerol 3-phosphate = 1-dodecanoyl-sn-glycerol 3-phosphate + CoA. It catalyses the reaction 1-acyl-sn-glycero-3-phospho-(1'-sn-glycerol) + an acyl-CoA = a 1,2-diacyl-sn-glycero-3-phospho-(1'-sn-glycerol) + CoA. It participates in phospholipid metabolism; CDP-diacylglycerol biosynthesis; CDP-diacylglycerol from sn-glycerol 3-phosphate: step 1/3. Functionally, mitochondrial membrane protein that catalyzes the essential first step of biosynthesis of glycerolipids such as triglycerides, phosphatidic acids and lysophosphatidic acids. Esterifies acyl-group from acyl-coenzyme A (acyl-CoA) to the sn-1 position of glycerol-3-phosphate, to produce lysophosphatidic acid. Has a narrow hydrophobic binding cleft that selects for a linear acyl chain. Catalytic activity is higher for substrates with a 16-carbon acyl chain. The sequence is that of Glycerol-3-phosphate acyltransferase 1, mitochondrial from Rattus norvegicus (Rat).